Here is a 396-residue protein sequence, read N- to C-terminus: Aldo-keto reductase ausK (396 aa).

Asp76 is an NADP(+) binding site. Catalysis depends on Tyr81, which acts as the Proton donor. His156 lines the substrate pocket. NADP(+) contacts are provided by residues Cys186–Asn187, Gln212, Asp241–Arg251, and Arg317–Asn325.

This sequence belongs to the aldo/keto reductase family. Aldo/keto reductase 2 subfamily. Homodimer.

Its pathway is secondary metabolite biosynthesis; terpenoid biosynthesis. In terms of biological role, aldo-keto reductase; part of the gene cluster that mediates the biosynthesis of calidodehydroaustin, a fungal meroterpenoid. The first step of the pathway is the synthesis of 3,5-dimethylorsellinic acid by the polyketide synthase ausA. 3,5-dimethylorsellinic acid is then prenylated by the polyprenyl transferase ausN. Further epoxidation by the FAD-dependent monooxygenase ausM and cyclization by the probable terpene cyclase ausL lead to the formation of protoaustinoid A. Protoaustinoid A is then oxidized to spiro-lactone preaustinoid A3 by the combined action of the FAD-binding monooxygenases ausB and ausC, and the dioxygenase ausE. Acid-catalyzed keto-rearrangement and ring contraction of the tetraketide portion of preaustinoid A3 by ausJ lead to the formation of preaustinoid A4. The aldo-keto reductase ausK, with the help of ausH, is involved in the next step by transforming preaustinoid A4 into isoaustinone which is in turn hydroxylated by the P450 monooxygenase ausI to form austinolide. The cytochrome P450 monooxygenase ausG modifies austinolide to austinol. Austinol is further acetylated to austin by the O-acetyltransferase ausP, which spontaneously changes to dehydroaustin. The cytochrome P450 monooxygenase ausR then converts dehydroaustin is into 7-dehydrodehydroaustin. The hydroxylation catalyzed by ausR permits the O-acetyltransferase ausQ to add an additional acetyl group to the molecule, leading to the formation of acetoxydehydroaustin. The short chain dehydrogenase ausT catalyzes the reduction of the double bond present between carbon atoms 1 and 2 to convert 7-dehydrodehydroaustin into 1,2-dihydro-7-hydroxydehydroaustin. AusQ catalyzes not only an acetylation reaction but also the addition of the PKS ausV diketide product to 1,2-dihydro-7-hydroxydehydroaustin, forming precalidodehydroaustin. Finally, the iron/alpha-ketoglutarate-dependent dioxygenase converts precalidodehydroaustin into calidodehydroaustin. This is Aldo-keto reductase ausK from Aspergillus calidoustus.